The sequence spans 130 residues: uncharacterized protein (130 aa).

The 55-residue stretch at 19–73 (IYSLRLAKGLSRQQLAEVIDVTHQQLQKYEKAINRISVGRLVLIAEALDRNIDYF) folds into the HTH cro/C1-type domain. The segment at residues 30–49 (RQQLAEVIDVTHQQLQKYEK) is a DNA-binding region (H-T-H motif).

This is an uncharacterized protein from Rickettsia prowazekii (strain Madrid E).